Consider the following 196-residue polypeptide: MSIPKSTPDRRVTRVMGVDPGLTRCGVGVVEGGLGSSLKLIAVGVIRTPADLDHAHRLLRIHDGLEEWRDHTRPDAIAVEKVFAQHNRNTVAGTAQAAGIAMMIAARHGLPVALHTPSEVKAAISGSGRADKAQVGFMVARVLRLSAPPKPADAADAVALAICHLWRGGAARRIEAAVATQRRGRRVPRSWKDLAR.

Catalysis depends on residues aspartate 19, glutamate 80, and aspartate 153. Mg(2+)-binding residues include aspartate 19, glutamate 80, and aspartate 153.

It belongs to the RuvC family. As to quaternary structure, homodimer which binds Holliday junction (HJ) DNA. The HJ becomes 2-fold symmetrical on binding to RuvC with unstacked arms; it has a different conformation from HJ DNA in complex with RuvA. In the full resolvosome a probable DNA-RuvA(4)-RuvB(12)-RuvC(2) complex forms which resolves the HJ. Mg(2+) is required as a cofactor.

Its subcellular location is the cytoplasm. The enzyme catalyses Endonucleolytic cleavage at a junction such as a reciprocal single-stranded crossover between two homologous DNA duplexes (Holliday junction).. Functionally, the RuvA-RuvB-RuvC complex processes Holliday junction (HJ) DNA during genetic recombination and DNA repair. Endonuclease that resolves HJ intermediates. Cleaves cruciform DNA by making single-stranded nicks across the HJ at symmetrical positions within the homologous arms, yielding a 5'-phosphate and a 3'-hydroxyl group; requires a central core of homology in the junction. The consensus cleavage sequence is 5'-(A/T)TT(C/G)-3'. Cleavage occurs on the 3'-side of the TT dinucleotide at the point of strand exchange. HJ branch migration catalyzed by RuvA-RuvB allows RuvC to scan DNA until it finds its consensus sequence, where it cleaves and resolves the cruciform DNA. The protein is Crossover junction endodeoxyribonuclease RuvC of Cutibacterium acnes (strain DSM 16379 / KPA171202) (Propionibacterium acnes).